Reading from the N-terminus, the 144-residue chain is Large ribosomal subunit protein uL16 (144 aa).

This sequence belongs to the universal ribosomal protein uL16 family. As to quaternary structure, part of the 50S ribosomal subunit.

Its function is as follows. Binds 23S rRNA and is also seen to make contacts with the A and possibly P site tRNAs. This chain is Large ribosomal subunit protein uL16, found in Bacillus cytotoxicus (strain DSM 22905 / CIP 110041 / 391-98 / NVH 391-98).